A 687-amino-acid chain; its full sequence is MEELVGLREGSSGNPVALRELWGPCPRLRRGIRGGLEWLKQKLFRVGEDWYFLMTLGVLMALISYAMNFALGRVVRAHKWLYREIGDSHLLRYLSWTVYPVALVSFSSGFSQSITPFSGGSGIPELKTILSGVVLENYLDIKNFGAKVVGLSCTLATGSTLFLGKVGPFVHLSVMIAAYLGRVRTKTIGEAENKSKQNEMLVAGAAVGVATVFAAPFSGVLFCIEVMSSHFSVWDYWRGFFAATCGAFMFRLLAVFNSEQETITSLYKTSFPVDVPFDLPEIFFFVLLGAICGVASCAYLYCQRTFLAFTKTNKLISKLMATSKPLYAALAATVLASITYPPGVGRFMASRLSMREHLDTLFDNHSWALLTRNSSPPWPAEPDPQHLWWEWYHPRFTIFGTLAFFLVMKFWMLILATTIPMPAGYFLPIFIIGAAIGRLLGEALSVAFPEGIVAGGVINPIMPGGYALAGAAAFSGAVTHSISTALLAFELTGQIVHALPVLMAVLAANAIAQSCQPSFYDGTIMVKKLPYLPWIRGRPINSHRVIVEHFMRRAISTLARDAALEQVVKVLTSTDEAEYPLVESTESQLLVGIVQRAQLVQALQAEAPARASGQQRCLQDILAGGCPTEPVTLTLSPETSLHQAHNLFELLNLRSLYVTSKGRAVGYVSWVELEKAISALTNPPPAK.

A run of 4 helical transmembrane segments spans residues 52–72 (FLMTLGVLMALISYAMNFALG), 161–181 (LFLGKVGPFVHLSVMIAAYLG), 202–222 (VAGAAVGVATVFAAPFSGVLF), and 236–256 (YWRGFFAATCGAFMFRLLAVF). Ca(2+)-binding residues include glutamate 259, glutamate 261, aspartate 278, and glutamate 281. Helical transmembrane passes span 282–302 (IFFFVLLGAICGVASCAYLYC), 325–345 (PLYAALAATVLASITYPPGVG), 396–416 (FTIFGTLAFFLVMKFWMLILA), 417–437 (TTIPMPAGYFLPIFIIGAAIG), 452–472 (IVAGGVINPIMPGGYALAGAA), and 486–506 (LLAFELTGQIVHALPVLMAVL). Over 507–687 (AANAIAQSCQ…SALTNPPPAK (181 aa)) the chain is Cytoplasmic. CBS domains lie at 551–612 (MRRA…ARAS) and 628–686 (TEPV…PPPA).

This sequence belongs to the chloride channel (TC 2.A.49) family. CLCNKA subfamily. In terms of assembly, homodimer. Interacts with BSND. In terms of tissue distribution, expressed predominantly in the kidney.

It is found in the basolateral cell membrane. The catalysed reaction is chloride(in) = chloride(out). It carries out the reaction bromide(in) = bromide(out). It catalyses the reaction nitrate(in) = nitrate(out). The enzyme catalyses iodide(out) = iodide(in). In terms of biological role, anion-selective channel permeable to small monovalent anions with ion selectivity for chloride &gt; bromide &gt; nitrate &gt; iodide. Forms a homodimeric channel where each subunit has its own ion conduction pathway. May conduct double-barreled currents controlled by two types of gates, two fast gates that control each subunit independently and a slow common gate that opens and shuts off both subunits simultaneously. Assembles with the regulatory subunit BSND/Barttin for sorting at the basolateral plasma membrane domain and functional switch to the ion conducting state. CLCNKA:BSND channels display mostly a linear current-voltage relationship with fast gating at negative potentials. Mediates transepithelial chloride transport from the lumen to interstitial compartment along the thin ascending limb of Henle's loop, contributing to generation of hypertonic medullary interstitium as a countercurrent system to achieve urine concentration. Conducts chloride currents in the stria vascularis of the inner ear to establish the endocochlear potential necessary for normal hearing. This chain is Chloride channel protein ClC-Ka (CLCNKA), found in Oryctolagus cuniculus (Rabbit).